Consider the following 319-residue polypeptide: Transcription factor VBP (319 aa).

Low complexity-rich tracts occupy residues 1 to 31 (MPGR…GAVA) and 143 to 158 (ASAS…STAV). Disordered stretches follow at residues 1-35 (MPGR…QQPE) and 139-186 (EKEP…DPDC). Residues 159–180 (YQQSEAASSTESPPQNERNTPS) show a composition bias toward polar residues. In terms of domain architecture, bZIP spans 243 to 306 (DEKYWTRRKK…GRCKNIVSKY (64 aa)). Positions 245–265 (KYWTRRKKNNVAAKRSRDARR) are basic motif. The leucine-zipper stretch occupies residues 266 to 273 (LKENQITI).

Belongs to the bZIP family. PAR subfamily. In terms of assembly, binds DNA as a homodimer or a heterodimer. Exists as a stable dimer in the absence of DNA. In terms of tissue distribution, isoform 1 and isoform 3 are expressed in a variety of somatic tissues, including liver, heart, intestine, stomach and kidney. Both isoforms are also expressed in hepatoma (LMH) cells and in embryonic fibroblast cell lines. Isoform 2 and isoform 4 are expressed in adult heart and intestine.

It is found in the nucleus. In terms of biological role, transcription factor that binds to and transactivates the vitellogenin II (VTG2) promoter. Binds to the palindromic sequence 5'-GTTTACATAAAC-3'. The chain is Transcription factor VBP (TEF) from Gallus gallus (Chicken).